The following is a 282-amino-acid chain: ESX-1 secretion-associated protein EspG1 (282 aa).

The protein belongs to the EspG family. In terms of assembly, interacts specifically with ESX-1-dependent PE/PPE proteins.

It is found in the cytoplasm. In terms of biological role, part of the ESX-1 / type VII specialized secretion system (T7SS), which exports several proteins including EsxA and EsxB. Specific chaperone for cognate PE/PPE proteins, plays an important role in preventing aggregation of PE/PPE dimers. Also plays a role in DNA conjugation, in at least recipient strain. The sequence is that of ESX-1 secretion-associated protein EspG1 from Mycolicibacterium smegmatis (strain ATCC 700084 / mc(2)155) (Mycobacterium smegmatis).